We begin with the raw amino-acid sequence, 207 residues long: Small ribosomal subunit protein uS4 (207 aa).

The segment at 30–51 (DKSKFDSKPGQHGRTSGARTSD) is disordered. In terms of domain architecture, S4 RNA-binding spans 97 to 157 (SRLDNVVYRM…EKSKKQGRIA (61 aa)).

It belongs to the universal ribosomal protein uS4 family. In terms of assembly, part of the 30S ribosomal subunit. Contacts protein S5. The interaction surface between S4 and S5 is involved in control of translational fidelity.

In terms of biological role, one of the primary rRNA binding proteins, it binds directly to 16S rRNA where it nucleates assembly of the body of the 30S subunit. Functionally, with S5 and S12 plays an important role in translational accuracy. This chain is Small ribosomal subunit protein uS4, found in Verminephrobacter eiseniae (strain EF01-2).